Here is a 588-residue protein sequence, read N- to C-terminus: Secreted triacylglycerol lipase LIP1 (588 aa).

The signal sequence occupies residues 1-20 (MRFSGFVSGLGLGLLTAVSA). Ser-258 acts as the Acyl-ester intermediate in catalysis. N-linked (GlcNAc...) asparagine glycosylation occurs at Asn-400.

The protein belongs to the type-B carboxylesterase/lipase family.

The protein resides in the secreted. It catalyses the reaction a triacylglycerol + H2O = a diacylglycerol + a fatty acid + H(+). Functionally, secreted acylglycerol lipase required for efficient utilization of saturated triglyceride lipids. Is not involved in virulence. This Gibberella zeae (strain ATCC MYA-4620 / CBS 123657 / FGSC 9075 / NRRL 31084 / PH-1) (Wheat head blight fungus) protein is Secreted triacylglycerol lipase LIP1.